Reading from the N-terminus, the 100-residue chain is UPF0235 protein TC_0667 (100 aa).

This sequence belongs to the UPF0235 family.

In Chlamydia muridarum (strain MoPn / Nigg), this protein is UPF0235 protein TC_0667.